Here is a 782-residue protein sequence, read N- to C-terminus: Chaoptin (782 aa).

LRR repeat units lie at residues 16–37 (SLLT…PSDA), 43–64 (RLEE…SFHF), 67–88 (SLKK…TFQG), 93–114 (DLTE…TFAD), 117–138 (QLEQ…AFMN), 141–162 (SLKR…TFQN), 165–186 (ELED…IFDQ), 191–212 (GMFH…PSVP), 224–245 (NIKV…FFRP), 249–270 (SLMQ…LFGN), 273–294 (HLQV…TFRN), 297–318 (KLQW…LFRF), 321–342 (NLRI…LFRE), 344–364 (GLER…TSLS), 370–391 (TLSE…GQLA), 395–416 (CLSW…TFKG), 419–442 (RLAS…SFQG), 446–467 (TLLH…STPN), 468–488 (LLSL…VAGN), 491–512 (SLRY…THSL), 514–535 (ELRH…SLLG), and 539–560 (QLEE…AFCK). Asn196, Asn234, and Asn262 each carry an N-linked (GlcNAc...) asparagine glycan. 2 N-linked (GlcNAc...) asparagine glycosylation sites follow: Asn454 and Asn488. An N-linked (GlcNAc...) asparagine glycan is attached at Asn530. Asn618, Asn648, and Asn667 each carry an N-linked (GlcNAc...) asparagine glycan.

The protein belongs to the chaoptin family.

Its subcellular location is the cell membrane. Required for photoreceptor cell morphogenesis. Mediates homophilic cellular adhesion. The polypeptide is Chaoptin (CHP) (Tribolium castaneum (Red flour beetle)).